Reading from the N-terminus, the 565-residue chain is Coiled-coil domain-containing protein 17 (565 aa).

The tract at residues 58 to 87 (IMAQEKSRDQEASTSALKRLTEETAGSPGE) is disordered. 2 coiled-coil regions span residues 97–160 (ARRM…TLGA) and 219–271 (LQLQ…KVLS).

This chain is Coiled-coil domain-containing protein 17 (Ccdc17), found in Mus musculus (Mouse).